Reading from the N-terminus, the 209-residue chain is Inducible T-cell costimulator (209 aa).

A signal peptide spans 1–19 (MKSDLRYFFLFCIQVEILA). Over 20 to 141 (GEFNDSAASE…YESELCCQLK (122 aa)) the chain is Extracellular. N-linked (GlcNAc...) asparagine glycosylation occurs at Asn23. An Ig-like V-type domain is found at 30 to 133 (MFIFHNGGVQ…LSREYLNIYE (104 aa)). 2 cysteine pairs are disulfide-bonded: Cys42/Cys109 and Cys63/Cys83. Asn89 is a glycosylation site (N-linked (GlcNAc...) asparagine). The chain crosses the membrane as a helical span at residues 142-162 (FWLPIGCAAFVTVCVFGCVLM).

In terms of assembly, homodimer; disulfide-linked. Interacts with ICOSLG. Interacts with PIK3R1. Interacts with TBK1; this interaction is critical for the maturation of T follicular regulatory cells. Post-translationally, N-glycosylated.

Its subcellular location is the cell membrane. Functionally, stimulatory receptor expressed in activated or antigen-experienced T-cells that plays an important role in the immune response. Upon binding to its ligand ICOSL expressed on antigen presenting cells (APCs), delivers costimulatory signals that enhances all basic T-cell responses to a foreign antigen, namely proliferation, secretion of lymphokines including IL10, up-regulation of molecules that mediate cell-cell interaction, and effective help for antibody secretion by B-cells. Also acts as a costimulatory receptor critical for the differentiation of T follicular regulatory cells upon immune challenges such as viral infection. Mechanistically, potentiates TCR-induced calcium flux by augmenting PLCG1 activation and actin remodeling. In addition, activates PI3K signaling pathways independently of calcium flux. Essential both for efficient interaction between T and B-cells and for normal antibody responses to T-cell dependent antigens. Prevents the apoptosis of pre-activated T-cells. Plays a critical role in CD40-mediated class switching of immunoglobin isotypes. This is Inducible T-cell costimulator (ICOS) from Bos taurus (Bovine).